We begin with the raw amino-acid sequence, 67 residues long: Ayadualin (67 aa).

The N-terminal stretch at 1–20 (MNKIILFSAVFLALVFCAEA) is a signal peptide. Positions 35 to 54 (PDDTVDIDEGLPDAFDEDYE) are enriched in acidic residues. Residues 35 to 67 (PDDTVDIDEGLPDAFDEDYEQDGHNPYPCRGDC) are disordered. Residues 64 to 66 (RGD) carry the Integrin-binding motif motif.

As to expression, salivary gland.

Its subcellular location is the secreted. Its function is as follows. Inhibits collagen- and ADP-induced host platelet aggregation by blocking the binding of host integrin alpha-IIb/beta-3 (ITGA2B/ITGB3) to fibrinogen. Inhibits the intrinsic blood coagulation pathway in the host by blocking the activity of host coagulation factor XIIa (F12). The sequence is that of Ayadualin from Lutzomyia ayacuchensis (Sand fly).